A 204-amino-acid chain; its full sequence is Lymphotoxin-alpha (204 aa).

The signal sequence occupies residues 1 to 33; sequence MTPPGRLYLLRVCSTPPLLLLGLLLALPLEAQG. Residues 62–204 form the THD domain; that stretch reads PAAHLVGDPS…SSVFFGAFAL (143 aa). Asn-95 carries N-linked (GlcNAc...) asparagine glycosylation. Cysteines 119 and 155 form a disulfide.

The protein belongs to the tumor necrosis factor family. Homotrimer, and heterotrimer of either two LTB and one LTA subunits or (less prevalent) two LTA and one LTB subunits. Interacts with TNFRSF14.

It is found in the secreted. It localises to the membrane. Its function is as follows. Cytokine that in its homotrimeric form binds to TNFRSF1A/TNFR1, TNFRSF1B/TNFBR and TNFRSF14/HVEM. In its heterotrimeric form with LTB binds to TNFRSF3/LTBR. Lymphotoxin is produced by lymphocytes and is cytotoxic for a wide range of tumor cells in vitro and in vivo. In Bos taurus (Bovine), this protein is Lymphotoxin-alpha (LTA).